The following is a 209-amino-acid chain: Uracil phosphoribosyltransferase (209 aa).

5-phospho-alpha-D-ribose 1-diphosphate contacts are provided by residues Arg-79, Arg-104, and 131–139 (DPMLATGGS). Residues Val-194 and 199–201 (GDA) each bind uracil. 5-phospho-alpha-D-ribose 1-diphosphate is bound at residue Asp-200.

The protein belongs to the UPRTase family. Requires Mg(2+) as cofactor.

The enzyme catalyses UMP + diphosphate = 5-phospho-alpha-D-ribose 1-diphosphate + uracil. It participates in pyrimidine metabolism; UMP biosynthesis via salvage pathway; UMP from uracil: step 1/1. Its activity is regulated as follows. Allosterically activated by GTP. Functionally, catalyzes the conversion of uracil and 5-phospho-alpha-D-ribose 1-diphosphate (PRPP) to UMP and diphosphate. The polypeptide is Uracil phosphoribosyltransferase (Bacillus cereus (strain Q1)).